The chain runs to 332 residues: 5-dehydro-2-deoxygluconokinase (332 aa).

Belongs to the carbohydrate kinase PfkB family.

The catalysed reaction is 5-dehydro-2-deoxy-D-gluconate + ATP = 6-phospho-5-dehydro-2-deoxy-D-gluconate + ADP + H(+). It participates in polyol metabolism; myo-inositol degradation into acetyl-CoA; acetyl-CoA from myo-inositol: step 5/7. Catalyzes the phosphorylation of 5-dehydro-2-deoxy-D-gluconate (2-deoxy-5-keto-D-gluconate or DKG) to 6-phospho-5-dehydro-2-deoxy-D-gluconate (DKGP). This chain is 5-dehydro-2-deoxygluconokinase, found in Bacillus anthracis (strain A0248).